Consider the following 80-residue polypeptide: Cell division protein ZapB (80 aa).

Positions Phe3–Asn80 form a coiled coil.

This sequence belongs to the ZapB family. In terms of assembly, homodimer. The ends of the coiled-coil dimer bind to each other, forming polymers. Interacts with FtsZ.

The protein resides in the cytoplasm. In terms of biological role, non-essential, abundant cell division factor that is required for proper Z-ring formation. It is recruited early to the divisome by direct interaction with FtsZ, stimulating Z-ring assembly and thereby promoting cell division earlier in the cell cycle. Its recruitment to the Z-ring requires functional FtsA or ZipA. This Edwardsiella ictaluri (strain 93-146) protein is Cell division protein ZapB.